Consider the following 113-residue polypeptide: Large ribosomal subunit protein uL24 (113 aa).

Belongs to the universal ribosomal protein uL24 family. In terms of assembly, part of the 50S ribosomal subunit.

One of two assembly initiator proteins, it binds directly to the 5'-end of the 23S rRNA, where it nucleates assembly of the 50S subunit. In terms of biological role, one of the proteins that surrounds the polypeptide exit tunnel on the outside of the subunit. This Synechococcus sp. (strain RCC307) protein is Large ribosomal subunit protein uL24.